The following is a 733-amino-acid chain: Phosphoribosylformylglycinamidine synthase subunit PurL (733 aa).

Residue histidine 44 is part of the active site. Tyrosine 47 and lysine 86 together coordinate ATP. Glutamate 88 contributes to the Mg(2+) binding site. Residues 89–92 (SHNH) and arginine 111 contribute to the substrate site. Histidine 90 (proton acceptor) is an active-site residue. Position 112 (aspartate 112) interacts with Mg(2+). Glutamine 233 provides a ligand contact to substrate. Aspartate 261 serves as a coordination point for Mg(2+). Substrate is bound at residue 305–307 (ESQ). Residues aspartate 492 and glycine 529 each contribute to the ATP site. Asparagine 530 contacts Mg(2+). Serine 532 serves as a coordination point for substrate.

This sequence belongs to the FGAMS family. Monomer. Part of the FGAM synthase complex composed of 1 PurL, 1 PurQ and 2 PurS subunits.

The protein resides in the cytoplasm. It catalyses the reaction N(2)-formyl-N(1)-(5-phospho-beta-D-ribosyl)glycinamide + L-glutamine + ATP + H2O = 2-formamido-N(1)-(5-O-phospho-beta-D-ribosyl)acetamidine + L-glutamate + ADP + phosphate + H(+). Its pathway is purine metabolism; IMP biosynthesis via de novo pathway; 5-amino-1-(5-phospho-D-ribosyl)imidazole from N(2)-formyl-N(1)-(5-phospho-D-ribosyl)glycinamide: step 1/2. Its function is as follows. Part of the phosphoribosylformylglycinamidine synthase complex involved in the purines biosynthetic pathway. Catalyzes the ATP-dependent conversion of formylglycinamide ribonucleotide (FGAR) and glutamine to yield formylglycinamidine ribonucleotide (FGAM) and glutamate. The FGAM synthase complex is composed of three subunits. PurQ produces an ammonia molecule by converting glutamine to glutamate. PurL transfers the ammonia molecule to FGAR to form FGAM in an ATP-dependent manner. PurS interacts with PurQ and PurL and is thought to assist in the transfer of the ammonia molecule from PurQ to PurL. The polypeptide is Phosphoribosylformylglycinamidine synthase subunit PurL (Thermomicrobium roseum (strain ATCC 27502 / DSM 5159 / P-2)).